A 212-amino-acid chain; its full sequence is Ribonuclease HII (212 aa).

In terms of domain architecture, RNase H type-2 spans 22–211 (GLVAGVDEVG…VADRILLQNT (190 aa)). D28, E29, and D120 together coordinate a divalent metal cation.

It belongs to the RNase HII family. The cofactor is Mn(2+). It depends on Mg(2+) as a cofactor.

It localises to the cytoplasm. The enzyme catalyses Endonucleolytic cleavage to 5'-phosphomonoester.. Endonuclease that specifically degrades the RNA of RNA-DNA hybrids. The sequence is that of Ribonuclease HII from Shewanella frigidimarina (strain NCIMB 400).